The chain runs to 368 residues: H-2 class I histocompatibility antigen, K-W28 alpha chain (368 aa).

An N-terminal signal peptide occupies residues 1-21 (MAPCMLLLLLAAALAPTQTRA). Residues 22–111 (GPHSLRYFHT…LLRYYNQSAG (90 aa)) are alpha-1. At 22 to 305 (GPHSLRYFHT…EPPPSAVSNT (284 aa)) the chain is on the extracellular side. N-linked (GlcNAc...) asparagine glycosylation is present at asparagine 107. Residues 112–203 (GSHTIQRMYG…KNGNATLLRT (92 aa)) form an alpha-2 region. Cysteine 122 and cysteine 185 are joined by a disulfide. The N-linked (GlcNAc...) asparagine glycan is linked to asparagine 197. The alpha-3 stretch occupies residues 204 to 295 (DSPKAHVTHH…GLPKPLTLRW (92 aa)). The Ig-like C1-type domain occupies 206-292 (PKAHVTHHSR…YHQGLPKPLT (87 aa)). Cysteine 224 and cysteine 280 are joined by a disulfide. A connecting peptide region spans residues 296–305 (EPPPSAVSNT). A helical membrane pass occupies residues 306–329 (VIIAVLVVLGAAIVTGAVVAFVMM). Topologically, residues 330 to 368 (RRRNTGGKGGDYALAPGSQTSDLSLPDCKVMVHDPHSLA) are cytoplasmic. Phosphoserine occurs at positions 350 and 353.

The protein belongs to the MHC class I family. As to quaternary structure, heterodimer of an alpha chain and a beta chain (beta-2-microglobulin).

The protein localises to the membrane. Involved in the presentation of foreign antigens to the immune system. This chain is H-2 class I histocompatibility antigen, K-W28 alpha chain (H2-K1), found in Mus musculus (Mouse).